We begin with the raw amino-acid sequence, 426 residues long: Serine--tRNA ligase (426 aa).

232-234 (TAE) provides a ligand contact to L-serine. ATP is bound at residue 263 to 265 (RSE). Glutamate 286 serves as a coordination point for L-serine. 350 to 353 (EISS) is an ATP binding site. Serine 385 serves as a coordination point for L-serine.

It belongs to the class-II aminoacyl-tRNA synthetase family. Type-1 seryl-tRNA synthetase subfamily. As to quaternary structure, homodimer. The tRNA molecule binds across the dimer.

The protein localises to the cytoplasm. The catalysed reaction is tRNA(Ser) + L-serine + ATP = L-seryl-tRNA(Ser) + AMP + diphosphate + H(+). The enzyme catalyses tRNA(Sec) + L-serine + ATP = L-seryl-tRNA(Sec) + AMP + diphosphate + H(+). It participates in aminoacyl-tRNA biosynthesis; selenocysteinyl-tRNA(Sec) biosynthesis; L-seryl-tRNA(Sec) from L-serine and tRNA(Sec): step 1/1. In terms of biological role, catalyzes the attachment of serine to tRNA(Ser). Is also able to aminoacylate tRNA(Sec) with serine, to form the misacylated tRNA L-seryl-tRNA(Sec), which will be further converted into selenocysteinyl-tRNA(Sec). The sequence is that of Serine--tRNA ligase from Pediococcus pentosaceus (strain ATCC 25745 / CCUG 21536 / LMG 10740 / 183-1w).